The primary structure comprises 222 residues: 3-dehydroquinate dehydratase (222 aa).

3-dehydroquinate-binding positions include 32–34 and Arg-64; that span reads ELR. His-117 functions as the Proton donor/acceptor in the catalytic mechanism. The active-site Schiff-base intermediate with substrate is Lys-143. Residue Arg-181 participates in 3-dehydroquinate binding.

It belongs to the type-I 3-dehydroquinase family. Homodimer.

The catalysed reaction is 3-dehydroquinate = 3-dehydroshikimate + H2O. It functions in the pathway metabolic intermediate biosynthesis; chorismate biosynthesis; chorismate from D-erythrose 4-phosphate and phosphoenolpyruvate: step 3/7. In terms of biological role, involved in the third step of the chorismate pathway, which leads to the biosynthesis of aromatic amino acids. Catalyzes the cis-dehydration of 3-dehydroquinate (DHQ) and introduces the first double bond of the aromatic ring to yield 3-dehydroshikimate. This chain is 3-dehydroquinate dehydratase, found in Aeropyrum pernix (strain ATCC 700893 / DSM 11879 / JCM 9820 / NBRC 100138 / K1).